Consider the following 91-residue polypeptide: Acylphosphatase (91 aa).

In terms of domain architecture, Acylphosphatase-like spans 6 to 91 (CMRCYISGRV…WEDYISFDVL (86 aa)). Catalysis depends on residues Arg-21 and Asn-39.

It belongs to the acylphosphatase family.

It carries out the reaction an acyl phosphate + H2O = a carboxylate + phosphate + H(+). This Legionella pneumophila (strain Corby) protein is Acylphosphatase (acyP).